Consider the following 426-residue polypeptide: CinA-like protein (426 aa).

This sequence belongs to the CinA family.

The polypeptide is CinA-like protein (Gloeobacter violaceus (strain ATCC 29082 / PCC 7421)).